The sequence spans 209 residues: Uracil phosphoribosyltransferase (209 aa).

5-phospho-alpha-D-ribose 1-diphosphate-binding positions include arginine 79, arginine 104, and 131 to 139 (DPMLATGGS). Residues isoleucine 194 and 199 to 201 (GDA) contribute to the uracil site. A 5-phospho-alpha-D-ribose 1-diphosphate-binding site is contributed by aspartate 200.

It belongs to the UPRTase family. Mg(2+) is required as a cofactor.

It carries out the reaction UMP + diphosphate = 5-phospho-alpha-D-ribose 1-diphosphate + uracil. The protein operates within pyrimidine metabolism; UMP biosynthesis via salvage pathway; UMP from uracil: step 1/1. Its activity is regulated as follows. Allosterically activated by GTP. Catalyzes the conversion of uracil and 5-phospho-alpha-D-ribose 1-diphosphate (PRPP) to UMP and diphosphate. The sequence is that of Uracil phosphoribosyltransferase from Clostridium beijerinckii (strain ATCC 51743 / NCIMB 8052) (Clostridium acetobutylicum).